We begin with the raw amino-acid sequence, 208 residues long: Ribosomal RNA large subunit methyltransferase E (208 aa).

S-adenosyl-L-methionine contacts are provided by Gly-61, Trp-63, Asp-81, Asp-97, and Asp-122. Catalysis depends on Lys-162, which acts as the Proton acceptor.

Belongs to the class I-like SAM-binding methyltransferase superfamily. RNA methyltransferase RlmE family.

It is found in the cytoplasm. The enzyme catalyses uridine(2552) in 23S rRNA + S-adenosyl-L-methionine = 2'-O-methyluridine(2552) in 23S rRNA + S-adenosyl-L-homocysteine + H(+). Functionally, specifically methylates the uridine in position 2552 of 23S rRNA at the 2'-O position of the ribose in the fully assembled 50S ribosomal subunit. In Pseudomonas putida (strain GB-1), this protein is Ribosomal RNA large subunit methyltransferase E.